The primary structure comprises 213 residues: Major fimbrial subunit (213 aa).

An N-terminal signal peptide occupies residues 1–20; sequence MKKTLLGSLILLAFAGNVQA. Cys-41 and Cys-81 are disulfide-bonded.

It belongs to the fimbrial protein family.

It is found in the fimbrium. Its function is as follows. Mediates adherence to oropharyngeal epithelial cells. Helps the airway colonization process. This Haemophilus influenzae protein is Major fimbrial subunit (hifA).